The primary structure comprises 472 residues: UDP-glucuronosyltransferase (472 aa).

Asn59, Asn227, and Asn377 each carry an N-linked (GlcNAc...) asparagine glycan. Residues 436 to 456 (FGFILLILLTVLWVTLKCCLF) form a helical membrane-spanning segment.

This sequence belongs to the UDP-glycosyltransferase family.

The protein localises to the microsome membrane. The protein resides in the endoplasmic reticulum membrane. It carries out the reaction glucuronate acceptor + UDP-alpha-D-glucuronate = acceptor beta-D-glucuronoside + UDP + H(+). In terms of biological role, UDPGT is of major importance in the conjugation and subsequent elimination of potentially toxic xenobiotics and endogenous compounds. This Pleuronectes platessa (European plaice) protein is UDP-glucuronosyltransferase (ugt3).